Reading from the N-terminus, the 485-residue chain is MELFNKTAHELIDMIKSKEVKVEEVVKSYIARTECIDEKIGAYLYLSKESALKEAKLLDEKIQRGEKLKGLWGVPVGIKDNISVSGMQNTCASKILENYISPYDATVISRLKENNGIILGKLNMDEFAMGSSNENSAFKIVRNPWDLERIPGGSSGGSTAAVASREIPLSLGSETGGSVRQPAALCGVVGLKPTYGRISRYGVISFASTLDQVGTIGRDVTDCAILTEVISGFDKRDSTSARVAVPNYKESLKKDLTGIRIGLPKEFFKEDLDESIRKQIEDAIKILEKNGAEIKICSLPLAEYSLSAYYIISTAEASSNLARIDGIRYGRRINTLDKHEDIYIQSRNEGFGEEVKKRIMLGTYVLSKGCYEKYYEKALKVRTLIKEDFKRVLKEVDAIITPTSKVTAFKFGERTKEVLSMYSSDEYTVPASIAGLPAISIPCGFSKGLPVGFQLIGDYFREDILFNIGYSYEQSTDFHKIMAKL.

Active-site charge relay system residues include Lys79 and Ser154. Ser178 functions as the Acyl-ester intermediate in the catalytic mechanism.

It belongs to the amidase family. GatA subfamily. As to quaternary structure, heterotrimer of A, B and C subunits.

The catalysed reaction is L-glutamyl-tRNA(Gln) + L-glutamine + ATP + H2O = L-glutaminyl-tRNA(Gln) + L-glutamate + ADP + phosphate + H(+). Allows the formation of correctly charged Gln-tRNA(Gln) through the transamidation of misacylated Glu-tRNA(Gln) in organisms which lack glutaminyl-tRNA synthetase. The reaction takes place in the presence of glutamine and ATP through an activated gamma-phospho-Glu-tRNA(Gln). This Clostridium novyi (strain NT) protein is Glutamyl-tRNA(Gln) amidotransferase subunit A.